A 120-amino-acid polypeptide reads, in one-letter code: Lysozyme (120 aa).

The C-type lysozyme domain maps to 1-120 (KRFTRCGLVN…NHSNPDISSC (120 aa)). 4 disulfides stabilise this stretch: Cys-6–Cys-120, Cys-27–Cys-110, Cys-62–Cys-76, and Cys-72–Cys-90. Catalysis depends on residues Glu-32 and Asp-50.

Belongs to the glycosyl hydrolase 22 family. In terms of assembly, monomer.

It catalyses the reaction Hydrolysis of (1-&gt;4)-beta-linkages between N-acetylmuramic acid and N-acetyl-D-glucosamine residues in a peptidoglycan and between N-acetyl-D-glucosamine residues in chitodextrins.. Lysozymes have primarily a bacteriolytic function; those in tissues and body fluids are associated with the monocyte-macrophage system and enhance the activity of immunoagents. The polypeptide is Lysozyme (Antheraea mylitta (Tasar silkworm)).